The chain runs to 747 residues: Heterogeneous nuclear ribonucleoprotein U-like protein 2 (747 aa).

The 35-residue stretch at 3 to 37 (VKRLKVTELRSELQRRGLDSRGLKVDLAQRLQEAL) folds into the SAP domain. 2 disordered regions span residues 40–242 (EMLE…EEED) and 627–666 (EEAR…GQRR). Over residues 73–97 (GDEEEDEEEEEEDEEALLEDEDEEP) the composition is skewed to acidic residues. The span at 115-125 (EAAAMEAAAEP) shows a compositional bias: low complexity. Over residues 137 to 147 (GSGGVNGGEEQ) the composition is skewed to gly residues. Residues 148 to 163 (GLGKREEDEPEERSGD) show a composition bias toward basic and acidic residues. Serine 161 is modified (phosphoserine). Threonine 165 is modified (phosphothreonine). Phosphoserine occurs at positions 168, 185, 188, 226, and 228. The segment covering 185–223 (SEKSKPAGSDGERRGVKRQRDEKDEHGRAYYEFREEAYH) has biased composition (basic and acidic residues). Positions 226 to 419 (SKSPLPPEEE…VELNFGQKEE (194 aa)) constitute a B30.2/SPRY domain. The span at 232–242 (PEEEAKDEEED) shows a compositional bias: acidic residues. Over residues 627 to 639 (EEARKLLPPSEKR) the composition is skewed to basic and acidic residues. Over residues 640–654 (TNRRNNRNKRNRQNR) the composition is skewed to basic residues. Omega-N-methylarginine is present on residues arginine 656, arginine 684, arginine 738, and arginine 747.

Binds to MLF1 and retains it in the nucleus.

It is found in the nucleus. In Homo sapiens (Human), this protein is Heterogeneous nuclear ribonucleoprotein U-like protein 2 (HNRNPUL2).